Reading from the N-terminus, the 472-residue chain is PEP-dependent dihydroxyacetone kinase, phosphoryl donor subunit DhaM (472 aa).

The region spanning 1 to 135 (MVNLVIVSHS…HALEAKREQL (135 aa)) is the PTS EIIA type-4 domain. His9 functions as the Tele-phosphohistidine intermediate in the catalytic mechanism. Residues 155 to 242 (ARSLAVVIKN…QLAEDNFGET (88 aa)) enclose the HPr domain. The active-site Pros-phosphohistidine intermediate is His169. The interval 264–472 (QPVLCTVQAK…VKTQRFNRQG (209 aa)) is PTS EI-like, N-terminal part. The active-site Tele-phosphohistidine intermediate is His430.

It belongs to the PEP-utilizing enzyme family. As to quaternary structure, homodimer. The dihydroxyacetone kinase complex is composed of a homodimer of DhaM, a homodimer of DhaK and the subunit DhaL.

It carries out the reaction dihydroxyacetone + phosphoenolpyruvate = dihydroxyacetone phosphate + pyruvate. It participates in polyol metabolism; glycerol degradation. Component of the dihydroxyacetone kinase complex, which is responsible for the phosphoenolpyruvate (PEP)-dependent phosphorylation of dihydroxyacetone. DhaM serves as the phosphoryl donor. Is phosphorylated by phosphoenolpyruvate in an EI- and HPr-dependent reaction, and a phosphorelay system on histidine residues finally leads to phosphoryl transfer to DhaL and dihydroxyacetone. The sequence is that of PEP-dependent dihydroxyacetone kinase, phosphoryl donor subunit DhaM from Escherichia coli (strain K12).